The following is a 466-amino-acid chain: mRNA-capping enzyme subunit alpha (466 aa).

The active-site N6-GMP-lysine intermediate is the lysine 67. Positions 408–466 (REQGLKNAQKQFNHQASARSSLSQQHSTEPEQSQDQPKYVDDDDDNWSDDEPDTKRQKI) are disordered. Residues 413–443 (KNAQKQFNHQASARSSLSQQHSTEPEQSQDQ) are compositionally biased toward polar residues. Residues 448-459 (DDDDDNWSDDEP) show a composition bias toward acidic residues.

It belongs to the eukaryotic GTase family. In terms of assembly, heterodimer. The mRNA-capping enzyme is composed of two separate chains alpha and beta, respectively a mRNA guanylyltransferase and an mRNA 5'-triphosphate monophosphatase.

The protein localises to the nucleus. It catalyses the reaction a 5'-end diphospho-ribonucleoside in mRNA + GTP + H(+) = a 5'-end (5'-triphosphoguanosine)-ribonucleoside in mRNA + diphosphate. Its function is as follows. Second step of mRNA capping. Transfer of the GMP moiety of GTP to the 5'-end of RNA via an enzyme-GMP covalent reaction intermediate. The polypeptide is mRNA-capping enzyme subunit alpha (CEG1) (Kluyveromyces lactis (strain ATCC 8585 / CBS 2359 / DSM 70799 / NBRC 1267 / NRRL Y-1140 / WM37) (Yeast)).